Here is a 473-residue protein sequence, read N- to C-terminus: MAP kinase-activated protein kinase 5 (473 aa).

Residues 22–304 (INWTQKLGAG…IEGVLDHPWL (283 aa)) enclose the Protein kinase domain. Residues 28 to 36 (LGAGISGPV) and Lys51 each bind ATP. Ser115 bears the Phosphoserine; by PKA mark. The active-site Proton acceptor is the Asp148. Thr182 bears the Phosphothreonine; by MAPK11, MAPK14, MAPK4, MAPK6 and PKA mark. 2 positions are modified to phosphoserine: Ser212 and Ser354. Positions 409–440 (ENEDEKLNEVMQEAWKYNRECKLLRDALQSFS) form a coiled coil.

This sequence belongs to the protein kinase superfamily. CAMK Ser/Thr protein kinase family. As to quaternary structure, interacts with SQSTM1. Interacts with ERK3/MAPK6 and ERK4/MAPK4 (via FRIEDE motif); the interaction is direct. Interacts with YWHAE; the interaction prevents phosphorylation of HSP27/HSPB1 leading to disrupt F-actin polymerization. Phosphorylated on Thr-182 ERK3/MAPK6 or ERK4/MAPK4; which is the regulatory phosphorylation site and is located on the T-loop/loop 12, leading to activation. Phosphorylation at Thr-182 by p38-alpha/MAPK14, p38-beta/MAPK11 is subject to debate. Phosphorylated at Ser-115 by PKA/PRKACA, leading to localization to the cytoplasm. Autophosphorylated. As to expression, expressed ubiquitously.

Its subcellular location is the cytoplasm. The protein localises to the nucleus. It catalyses the reaction L-seryl-[protein] + ATP = O-phospho-L-seryl-[protein] + ADP + H(+). The catalysed reaction is L-threonyl-[protein] + ATP = O-phospho-L-threonyl-[protein] + ADP + H(+). Its activity is regulated as follows. Activated following phosphorylation at Thr-182 by p38-alpha/MAPK14, p38-beta/MAPK11, ERK2/MAPK1, ERK3/MAPK6, and ERK4/MAPK4. Activated by stress-related extracellular stimuli; such as H(2)O(2), arsenite, anisomycin TNF alpha and also PMA and the calcium ionophore A23187; but to a lesser extent. In vitro, activated by SQSTM1. Inhibited by diterpenoid alkaloid noroxoaconitine. Functionally, tumor suppressor serine/threonine-protein kinase involved in mTORC1 signaling and post-transcriptional regulation. Phosphorylates FOXO3, ERK3/MAPK6, ERK4/MAPK4, HSP27/HSPB1, p53/TP53 and RHEB. Acts as a tumor suppressor by mediating Ras-induced senescence and phosphorylating p53/TP53. Involved in post-transcriptional regulation of MYC by mediating phosphorylation of FOXO3: phosphorylation of FOXO3 leads to promote nuclear localization of FOXO3, enabling expression of miR-34b and miR-34c, 2 post-transcriptional regulators of MYC that bind to the 3'UTR of MYC transcript and prevent MYC translation. Acts as a negative regulator of mTORC1 signaling by mediating phosphorylation and inhibition of RHEB. Part of the atypical MAPK signaling via its interaction with ERK3/MAPK6 or ERK4/MAPK4: the precise role of the complex formed with ERK3/MAPK6 or ERK4/MAPK4 is still unclear, but the complex follows a complex set of phosphorylation events: upon interaction with atypical MAPK (ERK3/MAPK6 or ERK4/MAPK4), ERK3/MAPK6 (or ERK4/MAPK4) is phosphorylated and then mediates phosphorylation and activation of MAPKAPK5, which in turn phosphorylates ERK3/MAPK6 (or ERK4/MAPK4). Mediates phosphorylation of HSP27/HSPB1 in response to PKA/PRKACA stimulation, inducing F-actin rearrangement. This chain is MAP kinase-activated protein kinase 5 (Mapkapk5), found in Mus musculus (Mouse).